We begin with the raw amino-acid sequence, 390 residues long: tRNA-specific 2-thiouridylase MnmA (390 aa).

ATP-binding positions include 33–40 (AMSGGVDS) and methionine 59. The Nucleophile role is filled by cysteine 131. Cysteine 131 and cysteine 230 are joined by a disulfide. Glycine 155 is an ATP binding site. The tract at residues 180-182 (KDQ) is interaction with tRNA. Residue cysteine 230 is the Cysteine persulfide intermediate of the active site.

It belongs to the MnmA/TRMU family.

The protein localises to the cytoplasm. It carries out the reaction S-sulfanyl-L-cysteinyl-[protein] + uridine(34) in tRNA + AH2 + ATP = 2-thiouridine(34) in tRNA + L-cysteinyl-[protein] + A + AMP + diphosphate + H(+). In terms of biological role, catalyzes the 2-thiolation of uridine at the wobble position (U34) of tRNA, leading to the formation of s(2)U34. This chain is tRNA-specific 2-thiouridylase MnmA, found in Symbiobacterium thermophilum (strain DSM 24528 / JCM 14929 / IAM 14863 / T).